Reading from the N-terminus, the 369-residue chain is Maltose/maltodextrin import ATP-binding protein MalK (369 aa).

Residues 4–234 enclose the ABC transporter domain; the sequence is VTLRNVCKAY…PQNRFVAGFI (231 aa). 36–43 contributes to the ATP binding site; it reads GPSGCGKS.

The protein belongs to the ABC transporter superfamily. Maltooligosaccharide importer (TC 3.A.1.1.1) family. The complex is composed of two ATP-binding proteins (MalK), two transmembrane proteins (MalG and MalK) and a solute-binding protein (MalE).

Its subcellular location is the cell inner membrane. The enzyme catalyses D-maltose(out) + ATP + H2O = D-maltose(in) + ADP + phosphate + H(+). Its function is as follows. Part of the ABC transporter complex MalEFGK involved in maltose/maltodextrin import. Responsible for energy coupling to the transport system. In Photobacterium profundum (strain SS9), this protein is Maltose/maltodextrin import ATP-binding protein MalK.